The sequence spans 552 residues: Putative acetolactate synthase large subunit IlvB2 (552 aa).

Thiamine diphosphate is bound at residue glutamate 48. Residues 262–285 (FGDGRADEYLFDTPCDLLIAVGVS) and 309–328 (DPDPSAVGRFVATSLGITTS) contribute to the FAD site. The tract at residues 394–474 (TCISWTFRGI…VTWAVLNDGQ (81 aa)) is thiamine pyrophosphate binding. Mg(2+) is bound at residue aspartate 445.

Belongs to the TPP enzyme family. As to quaternary structure, heterodimer of large catalytic subunit and small regulatory subunit. The cofactor is Mg(2+). Thiamine diphosphate serves as cofactor.

It carries out the reaction 2 pyruvate + H(+) = (2S)-2-acetolactate + CO2. The protein operates within amino-acid biosynthesis; L-isoleucine biosynthesis; L-isoleucine from 2-oxobutanoate: step 1/4. Its pathway is amino-acid biosynthesis; L-valine biosynthesis; L-valine from pyruvate: step 1/4. Functionally, catalyzes the conversion of 2 pyruvate molecules into acetolactate in the first common step of the biosynthetic pathway of the branched-amino acids such as leucine, isoleucine, and valine. The chain is Putative acetolactate synthase large subunit IlvB2 (ilvB2) from Mycobacterium tuberculosis (strain ATCC 25618 / H37Rv).